Here is a 281-residue protein sequence, read N- to C-terminus: Probable endonuclease 4 (281 aa).

Zn(2+)-binding residues include His69, His109, Glu145, Asp179, His182, His216, Asp229, His231, and Glu261.

Belongs to the AP endonuclease 2 family. Zn(2+) serves as cofactor.

It catalyses the reaction Endonucleolytic cleavage to 5'-phosphooligonucleotide end-products.. In terms of biological role, endonuclease IV plays a role in DNA repair. It cleaves phosphodiester bonds at apurinic or apyrimidinic (AP) sites, generating a 3'-hydroxyl group and a 5'-terminal sugar phosphate. The polypeptide is Probable endonuclease 4 (Glaesserella parasuis serovar 5 (strain SH0165) (Haemophilus parasuis)).